We begin with the raw amino-acid sequence, 442 residues long: Radical S-adenosyl methionine domain-containing protein 1, mitochondrial (442 aa).

The transit peptide at 1–22 (MALPRSQARGWVKAAKMAQRRR) directs the protein to the mitochondrion. Residues 1–37 (MALPRSQARGWVKAAKMAQRRRPADDTGGPQSPAPGS) form a disordered region. A Radical SAM core domain is found at 34–270 (APGSQRAALY…RAVLREAGFR (237 aa)). Tyr43 contributes to the S-adenosyl-L-methionine binding site. [4Fe-4S] cluster-binding residues include Cys49, Cys53, and Cys56. S-adenosyl-L-methionine contacts are provided by residues Gly98, 99–100 (GT), Glu131, Gln158, Arg170, and Asp195.

Belongs to the anaerobic coproporphyrinogen-III oxidase family. HemW subfamily. The cofactor is [4Fe-4S] cluster.

It localises to the mitochondrion. Its function is as follows. May be a heme chaperone, appears to bind heme. Homologous bacterial proteins do not have oxygen-independent coproporphyrinogen-III oxidase activity. Binds 1 [4Fe-4S] cluster. The cluster is coordinated with 3 cysteines and an exchangeable S-adenosyl-L-methionine. The sequence is that of Radical S-adenosyl methionine domain-containing protein 1, mitochondrial (RSAD1) from Bos taurus (Bovine).